The following is a 320-amino-acid chain: L-lactate dehydrogenase 1 (320 aa).

NAD(+)-binding positions include valine 18, aspartate 39, arginine 44, tyrosine 69, and 83–84 (GA). The substrate site is built by glutamine 86 and arginine 92. Residues serine 105, 122-124 (AAN), and serine 147 contribute to the NAD(+) site. 124-127 (NPVD) contributes to the substrate binding site. 152 to 155 (DSSR) lines the substrate pocket. Histidine 179 functions as the Proton acceptor in the catalytic mechanism. Tyrosine 223 is modified (phosphotyrosine). Threonine 232 is a substrate binding site.

This sequence belongs to the LDH/MDH superfamily. LDH family. Homotetramer.

It is found in the cytoplasm. It carries out the reaction (S)-lactate + NAD(+) = pyruvate + NADH + H(+). The protein operates within fermentation; pyruvate fermentation to lactate; (S)-lactate from pyruvate: step 1/1. Its function is as follows. Catalyzes the conversion of lactate to pyruvate. This chain is L-lactate dehydrogenase 1, found in Lactiplantibacillus plantarum (strain ATCC BAA-793 / NCIMB 8826 / WCFS1) (Lactobacillus plantarum).